A 431-amino-acid polypeptide reads, in one-letter code: Trigger factor (431 aa).

Positions 164–249 (GDIAVIDFKG…IKEIKRKELP (86 aa)) constitute a PPIase FKBP-type domain.

The protein belongs to the FKBP-type PPIase family. Tig subfamily.

Its subcellular location is the cytoplasm. The enzyme catalyses [protein]-peptidylproline (omega=180) = [protein]-peptidylproline (omega=0). Its function is as follows. Involved in protein export. Acts as a chaperone by maintaining the newly synthesized protein in an open conformation. Functions as a peptidyl-prolyl cis-trans isomerase. The sequence is that of Trigger factor from Clostridium acetobutylicum (strain ATCC 824 / DSM 792 / JCM 1419 / IAM 19013 / LMG 5710 / NBRC 13948 / NRRL B-527 / VKM B-1787 / 2291 / W).